The sequence spans 307 residues: Phosphonates import ATP-binding protein PhnC (307 aa).

In terms of domain architecture, ABC transporter spans Ile-4 to Ala-252. Residue Gly-37–Ser-44 participates in ATP binding. Residues Ala-265–Arg-275 are compositionally biased toward basic and acidic residues. The segment at Ala-265–Arg-307 is disordered.

It belongs to the ABC transporter superfamily. Phosphonates importer (TC 3.A.1.9.1) family. In terms of assembly, the complex is composed of two ATP-binding proteins (PhnC), two transmembrane proteins (PhnE) and a solute-binding protein (PhnD).

Its subcellular location is the cell inner membrane. The enzyme catalyses phosphonate(out) + ATP + H2O = phosphonate(in) + ADP + phosphate + H(+). In terms of biological role, part of the ABC transporter complex PhnCDE involved in phosphonates import. Responsible for energy coupling to the transport system. The protein is Phosphonates import ATP-binding protein PhnC of Burkholderia pseudomallei (strain 1710b).